We begin with the raw amino-acid sequence, 538 residues long: Probable inorganic phosphate transporter 1-4 (538 aa).

Residues 1-23 lie on the Cytoplasmic side of the membrane; it reads MAGELKVLNALDSAKTQWYHFTA. Residues 24–44 traverse the membrane as a helical segment; the sequence is IVIAGMGFFTDAYDLFSISLV. Topologically, residues 45–69 are extracellular; sequence TKLLGRIYYFNPASKSPGSLPPNVS. A helical transmembrane segment spans residues 70–90; it reads AAVNGVAFCGTLAGQLFFGWL. Residues 91–98 lie on the Cytoplasmic side of the membrane; that stretch reads GDKMGRKK. Residues 99–119 form a helical membrane-spanning segment; that stretch reads VYGMTLMLMVICCLASGLSFG. Residues 120–123 are Extracellular-facing; sequence SSAK. The chain crosses the membrane as a helical span at residues 124–144; sequence GVMATLCFFRFWLGFGIGGDY. Residues 145-163 lie on the Cytoplasmic side of the membrane; that stretch reads PLSATIMSEYANKRTRGAF. The helical transmembrane segment at 164-184 threads the bilayer; that stretch reads IAAVFAMQGFGNLTGGIVAII. The Extracellular segment spans residues 185 to 210; sequence VSAAFKSRFDAPAYRDDRTGSTVPQA. Residues 211 to 231 form a helical membrane-spanning segment; that stretch reads DYAWRIVLMFGAIPALLTYYW. Over 232 to 294 the chain is Cytoplasmic; that stretch reads RMKMPETARY…RQFLRRHGRH (63 aa). The helical transmembrane segment at 295–315 threads the bilayer; it reads LLGTTVCWFVLDIAFYSSNLF. The Extracellular portion of the chain corresponds to 316–346; the sequence is QKDIYTAVQWLPKADTMSALEEMFKISRAQT. The helical transmembrane segment at 347–367 threads the bilayer; the sequence is LVALCGTIPGYWFTVFFIDII. The Cytoplasmic segment spans residues 368-369; sequence GR. Residues 370 to 390 form a helical membrane-spanning segment; that stretch reads FVIQLGGFFFMTAFMLGLAVP. The Extracellular portion of the chain corresponds to 391–396; the sequence is YHHWTT. A helical transmembrane segment spans residues 397–417; that stretch reads PGNHIGFVVMYAFTFFFANFG. The Cytoplasmic portion of the chain corresponds to 418–440; that stretch reads PNSTTFIVPAEIFPARLRSTCHG. A helical membrane pass occupies residues 441–461; the sequence is ISAAAGKAGAIVGSFGFLYAA. Residues 462–481 lie on the Extracellular side of the membrane; sequence QSTDASKTDAGYPPGIGVRN. Residues 482-502 traverse the membrane as a helical segment; that stretch reads SLFFLAGCNVIGFFFTFLVPE. At 503 to 538 the chain is on the cytoplasmic side; it reads SKGKSLEELSGENEDDDDVPEAPATADHRTAPAPPA. Positions 507–538 are disordered; the sequence is SLEELSGENEDDDDVPEAPATADHRTAPAPPA. Positions 511–522 are enriched in acidic residues; the sequence is LSGENEDDDDVP.

The protein belongs to the major facilitator superfamily. Phosphate:H(+) symporter (TC 2.A.1.9) family. As to expression, expressed at low levels in roots.

It is found in the membrane. In terms of biological role, high-affinity transporter for external inorganic phosphate. This chain is Probable inorganic phosphate transporter 1-4 (PHT1-4), found in Oryza sativa subsp. japonica (Rice).